Consider the following 300-residue polypeptide: Ribonuclease HIII (300 aa).

The RNase H type-2 domain maps to 83-300; sequence IPIIGSDEVG…THKAQALLTK (218 aa). The a divalent metal cation site is built by Asp-89, Glu-90, and Asp-194.

Belongs to the RNase HII family. RnhC subfamily. The cofactor is Mn(2+). Mg(2+) is required as a cofactor.

The protein resides in the cytoplasm. The catalysed reaction is Endonucleolytic cleavage to 5'-phosphomonoester.. Functionally, endonuclease that specifically degrades the RNA of RNA-DNA hybrids. The chain is Ribonuclease HIII from Streptococcus pyogenes serotype M5 (strain Manfredo).